We begin with the raw amino-acid sequence, 1186 residues long: Atrophin-1 (1186 aa).

Disordered stretches follow at residues 1–604, 618–763, and 781–858; these read MKTR…PTVT, ASSP…ARFN, and VPLE…HRPP. Positions 16–32 match the Nuclear localization signal motif; it reads RKKEAPGPREELRSRGR. The span at 17–29 shows a compositional bias: basic and acidic residues; it reads KKEAPGPREELRS. Phosphoserine is present on serine 34. Residues 45–63 are compositionally biased toward basic and acidic residues; it reads GKAEKSRQTAKKARVEEAS. A phosphoserine mark is found at serine 77, serine 79, serine 100, serine 102, and serine 106. Over residues 107-127 the composition is skewed to basic and acidic residues; the sequence is LDGRSLNDDGSSDPRDIDQDN. The segment covering 128 to 151 has biased composition (polar residues); sequence RSTSPSIYSPGSVENDSDSSSGLS. The segment covering 157–173 has biased composition (pro residues); the sequence is PYHPPPLFPPSPQPPDS. 3 stretches are compositionally biased toward low complexity: residues 258-270, 349-365, and 375-396; these read PISV…SGAP, PTLA…SSSA, and SSSS…SSAS. The segment covering 416–437 has biased composition (polar residues); the sequence is SLSVSNQPPKYTQPSLPSQAVW. A compositionally biased stretch (low complexity) spans 484–503; it reads QQQQQQQQQQQQQQQHHGNS. An involved in binding BAIAP2 region spans residues 513–563; the sequence is HPLEGGSSHHAHPYAMSPSLGSLRPYPPGPAHLPPPHSQVSYSQAGPNGPP. Pro residues predominate over residues 537–549; the sequence is PYPPGPAHLPPPH. Composition is skewed to low complexity over residues 565-582 and 618-628; these read SSSS…YPCS and ASSPAGYKTAS. The residue at position 628 (serine 628) is a Phosphoserine. N6-acetyllysine is present on lysine 637. Threonine 649 carries the phosphothreonine modification. Serine 657 carries the phosphoserine modification. A Phosphothreonine modification is found at threonine 665. Composition is skewed to pro residues over residues 689-714 and 735-748; these read GPGP…PASG and SPVP…PPPK. Serine 735 is subject to Phosphoserine; by MAPK8. Phosphoserine is present on residues serine 742 and serine 744. A compositionally biased stretch (basic and acidic residues) spans 791 to 835; sequence KRADLVEKVRREAEQRAREEKEREREREREKEREREKERELERSV. Residues 875–890 form a required for interaction with FAT1 region; it reads DTPALRTLSEYARPHV. The residue at position 892 (serine 892) is a Phosphoserine. The short motif at 1029–1037 is the Nuclear export signal element; the sequence is ALGNDPLAR. Arginine 1111 is modified (asymmetric dimethylarginine). A Glycyl lysine isopeptide (Lys-Gly) (interchain with G-Cter in SUMO2) cross-link involves residue lysine 1179.

In terms of assembly, interacts with NR2E1; the interaction represses the transcriptional activity of NR2E1. Interacts with BAIAP2, WWP1, WWP2, WWP3 and RERE. Interacts (via its N-terminus) with MTG8; the interaction enhances transcriptional repression of MTG8. Interacts with FAT1 (via a C-terminal domain). Interacts with PQBP1. Phosphorylated in vitro by MAPK8/JNK1 on Ser-735.

The protein localises to the nucleus. Its subcellular location is the cytoplasm. It localises to the perinuclear region. It is found in the cell junction. Transcriptional corepressor. Corepressor of MTG8 transcriptional repression. Recruits NR2E1 to repress transcription. Has some intrinsic repression activity. Promotes vascular smooth cell (VSMC) migration and orientation. The chain is Atrophin-1 (ATN1) from Pan troglodytes (Chimpanzee).